The sequence spans 376 residues: Beta-centractin (376 aa).

Position 1 is an N-acetylmethionine (methionine 1). Tyrosine 4 is subject to 3'-nitrotyrosine.

The protein belongs to the actin family. ARP1 subfamily.

The protein resides in the cytoplasm. It localises to the cytoskeleton. The protein localises to the microtubule organizing center. Its subcellular location is the centrosome. Its function is as follows. Component of a multi-subunit complex involved in microtubule based vesicle motility. It is associated with the centrosome. This Bos taurus (Bovine) protein is Beta-centractin (ACTR1B).